A 278-amino-acid polypeptide reads, in one-letter code: tRNA uridine(34) hydroxylase (278 aa).

A Rhodanese domain is found at 122-216; the sequence is QDPDVVVIDT…YLETIAPEES (95 aa). Cys-176 (cysteine persulfide intermediate) is an active-site residue.

This sequence belongs to the TrhO family.

It catalyses the reaction uridine(34) in tRNA + AH2 + O2 = 5-hydroxyuridine(34) in tRNA + A + H2O. Functionally, catalyzes oxygen-dependent 5-hydroxyuridine (ho5U) modification at position 34 in tRNAs. The chain is tRNA uridine(34) hydroxylase from Synechocystis sp. (strain ATCC 27184 / PCC 6803 / Kazusa).